The chain runs to 242 residues: Probable transcriptional regulatory protein LBA0733 (242 aa).

Residues 1 to 22 are disordered; that stretch reads MSGHSKWHNIQGRKNAQDAKRG.

This sequence belongs to the TACO1 family.

The protein resides in the cytoplasm. The polypeptide is Probable transcriptional regulatory protein LBA0733 (Lactobacillus acidophilus (strain ATCC 700396 / NCK56 / N2 / NCFM)).